Here is a 345-residue protein sequence, read N- to C-terminus: MASFIKAWGLVIISLCYTFFIAKLVPKGIKRLILFFPVFLIFFIVPFLIYSLHLLGITAFFIAWLANFKLLLFALGRGPLSSNHKPLSLPIFLAVSCLPIKIQLSPKPTKTHSHEGSTEGPLIYTIKAVFVVLIIKAYEYSTKLPEKVVLTLYAIHIYFALEIILAATAAAVRAMSDLELEPQFNKPYLATSLQDFWGRRWNLMVTGILRPTVYEPSLQLFSVLGPNYSQILAAFGTFVVSGIMHELIFFYMGRLRPDWKMMWFFLINGFCTTVEIAIKKTINGRWRFPKAISQVLTLTFVMVTALWLFLPEFNRCNIVEKALDEYAAIGAFAVEVRRKLTAYLF.

A run of 9 helical transmembrane segments spans residues 1–21, 32–52, 54–74, 86–106, 120–140, 148–168, 231–251, 258–278, and 291–311; these read MASFIKAWGLVIISLCYTFFI, LILFFPVFLIFFIVPFLIYSL, LLGITAFFIAWLANFKLLLFA, PLSLPIFLAVSCLPIKIQLSP, GPLIYTIKAVFVVLIIKAYEY, VVLTLYAIHIYFALEIILAAT, ILAAFGTFVVSGIMHELIFFY, DWKMMWFFLINGFCTTVEIAI, and AISQVLTLTFVMVTALWLFLP.

This sequence belongs to the wax synthase family.

The protein localises to the membrane. Its function is as follows. Involved in the esterification of cycloartenol. Not implicated in the formation of sterol esters in flowers or during seed maturation. Has a substrate preference toward saturated fatty acyl donors (16:0 &gt; 18:0 &gt; 16:1 &gt; 18:1). Does not require triacyglycerols (TAGs) as a fatty acyl donor, and is unable to acylate diacylglycerol to produce TAG. The sequence is that of Acyl-CoA--sterol O-acyltransferase 1 (ASAT1) from Arabidopsis thaliana (Mouse-ear cress).